Here is a 382-residue protein sequence, read N- to C-terminus: MRLLYGIRAHHDKIWSVSSHQKLPLLATGSSDKTSAIFRLSETEKFPRVTTLDDTHTRSIRSVMFKPPIDDTVVDENELLDPPTLAMGSFDAKLSVWQAELPQDNDEDMDQEPREIWKQERKVVERAAQWELMAVIEGHEHEVKAVAWNCHGSLVASCSRDKTIWIWETDPDTLEEFECISVLTEHQQDVKHVIWHPTQNLLASSSYDDTICIYRQEYDDDDWGCAAVLNGHQGTVWCSAFEHPKSPSASETTVRLVSASDDLTVRIWSTSKEGSETNHDALPSSIKSSNEMQWDQECILPSAHTYPVYSVVWSSVSGRIASAGADGKIAVYKQTDGVWEIEGVTSAAHGVHEINTLAWSKLDDNREVLVSGGDDGYVNVWE.

7 WD repeats span residues 9-48, 55-107, 138-178, 185-224, 231-278, 303-342, and 349-382; these read AHHDKIWSVSSHQKLPLLATGSSDKTSAIFRLSETEKFPR, THTR…DNDE, GHEH…EEFE, EHQQDVKHVIWHPTQNLLASSSYDDTICIYRQEYDDDDWG, GHQG…SETN, AHTYPVYSVVWSSVSGRIASAGADGKIAVYKQTDGVWEIE, and HGVHEINTLAWSKLDDNREVLVSGGDDGYVNVWE.

The protein belongs to the WD repeat CIA1 family. Interacts with NAR1.

The protein localises to the cytoplasm. The protein resides in the nucleus. In terms of biological role, essential component of the cytosolic iron-sulfur (Fe/S) protein assembly machinery. Required for the maturation of extramitochondrial Fe/S proteins. This chain is Probable cytosolic iron-sulfur protein assembly protein 1, found in Meyerozyma guilliermondii (strain ATCC 6260 / CBS 566 / DSM 6381 / JCM 1539 / NBRC 10279 / NRRL Y-324) (Yeast).